Here is a 165-residue protein sequence, read N- to C-terminus: Cyclic pyranopterin monophosphate synthase (165 aa).

Substrate is bound by residues 83–85 (FCH) and 120–121 (ME). Asp135 is a catalytic residue.

It belongs to the MoaC family. As to quaternary structure, homohexamer; trimer of dimers.

It catalyses the reaction (8S)-3',8-cyclo-7,8-dihydroguanosine 5'-triphosphate = cyclic pyranopterin phosphate + diphosphate. The protein operates within cofactor biosynthesis; molybdopterin biosynthesis. Its function is as follows. Catalyzes the conversion of (8S)-3',8-cyclo-7,8-dihydroguanosine 5'-triphosphate to cyclic pyranopterin monophosphate (cPMP). This Xanthomonas oryzae pv. oryzae (strain MAFF 311018) protein is Cyclic pyranopterin monophosphate synthase.